The following is a 226-amino-acid chain: E3 ubiquitin-protein ligase RNF186 (226 aa).

The RING-type zinc-finger motif lies at 39-85 (CLVCREPYNCARSPKLLSCQHTFCAVCLKLLLYVQEDTWSIPCPLCR). A run of 2 helical transmembrane segments spans residues 157–177 (HLLL…PGVI) and 179–199 (WVLA…CCHP).

Interacts with BNIP1. In terms of processing, polyubiquitinated. 'Lys-29'-linked autoubiquitination leads to proteasomal degradation.

It is found in the endoplasmic reticulum membrane. It catalyses the reaction S-ubiquitinyl-[E2 ubiquitin-conjugating enzyme]-L-cysteine + [acceptor protein]-L-lysine = [E2 ubiquitin-conjugating enzyme]-L-cysteine + N(6)-ubiquitinyl-[acceptor protein]-L-lysine.. It participates in protein modification; protein ubiquitination. Functionally, E3 ubiquitin protein ligase that is part of an apoptotic signaling pathway activated by endoplasmic reticulum stress. Stimulates the expression of proteins specific of the unfolded protein response (UPR), ubiquitinates BNIP1 and regulates its localization to the mitochondrion and induces calcium release from the endoplasmic reticulum that ultimately leads to cell apoptosis. Plays a role in the maintenance of intestinal homeostasis and clearance of enteric pathogens. Upon NOD2 stimulation, ubiquitinates the ER stress sensor activating transcription factor 6/ATF6 and promotes the unfolded protein response UPR. Participates in basal level of autophagy maintenance by regulating the ubiquitination of EPHB2. Upon stimulation by ligand EFNB1, ubiquitinates EPHB2 and further recruits MAP1LC3B for autophagy induction. Controls nutrient sensing by ubiquitinating Sestrin-2/SESN2, which is an intracellular sensor of cytosolic leucine and inhibitor of mTORC1 activity. The protein is E3 ubiquitin-protein ligase RNF186 of Mus musculus (Mouse).